The chain runs to 859 residues: Homeobox-leucine zipper protein HOX32 (859 aa).

Residues 7–31 form a disordered region; it reads AAVHGVGRQDRSSPGGGGAPQVDTG. The homeobox DNA-binding region spans 29–92; it reads DTGKYVRYTP…NRRCREKQRK (64 aa). Residues 100-129 adopt a coiled-coil conformation; sequence VNRKLTAMNKLLMEENDRLQKQVSRLVYEN. Positions 146 to 164 are enriched in polar residues; the sequence is TSCESVVTSGQHHQQQNPA. The disordered stretch occupies residues 146–172; it reads TSCESVVTSGQHHQQQNPAATRPQRDA. An START domain is found at 171–393; that stretch reads DANNPAGLLA…LRHIRQIAHE (223 aa).

Belongs to the HD-ZIP homeobox family. Class III subfamily. Expressed in seedlings, roots, stems, leaf sheaths and blades and panicles.

It is found in the nucleus. Its function is as follows. Probable transcription factor. The polypeptide is Homeobox-leucine zipper protein HOX32 (HOX32) (Oryza sativa subsp. japonica (Rice)).